Consider the following 623-residue polypeptide: UvrABC system protein C (623 aa).

The region spanning 12–91 (FSPGVYLYKD…IKQYKPRFNI (80 aa)) is the GIY-YIG domain. The region spanning 201-236 (SDLARGLRARMEAASLEMRFEEAAGLRDLITTVEEI) is the UVR domain. Residues 604 to 623 (PVASVAQSEDAAPDVPDPQA) form a disordered region.

This sequence belongs to the UvrC family. Interacts with UvrB in an incision complex.

Its subcellular location is the cytoplasm. In terms of biological role, the UvrABC repair system catalyzes the recognition and processing of DNA lesions. UvrC both incises the 5' and 3' sides of the lesion. The N-terminal half is responsible for the 3' incision and the C-terminal half is responsible for the 5' incision. The protein is UvrABC system protein C of Solibacter usitatus (strain Ellin6076).